The primary structure comprises 3102 residues: Laminin subunit alpha lam-3 (3102 aa).

The first 16 residues, 1–16 (MRLWLGLLAVSNIALG), serve as a signal peptide directing secretion. N-linked (GlcNAc...) asparagine glycans are attached at residues N19, N135, and N237. The 252-residue stretch at 44–295 (SERGLFPNIF…SISDISIGGQ (252 aa)) folds into the Laminin N-terminal domain. 16 cysteine pairs are disulfide-bonded: C296–C305, C298–C316, C318–C327, C330–C350, C353–C362, C355–C387, C390–C399, C402–C420, C423–C435, C425–C451, C453–C462, C465–C475, C478–C491, C480–C496, C498–C507, and C510–C525. Laminin EGF-like domains follow at residues 296–352 (CICY…VCQQ), 353–422 (CQCF…ACRT), 423–477 (CECD…TCEP), and 478–527 (CPCN…GCQP). The Laminin IV type A 1 domain maps to 548-740 (INNIGWHLTD…QDTLMGGVEV (193 aa)). Cystine bridges form between C774-C783, C776-C790, C793-C802, C805-C822, C825-C838, C827-C858, C861-C870, C873-C886, C889-C903, C891-C910, C913-C922, C925-C938, C941-C953, C943-C960, C962-C971, C974-C985, C988-C1000, C990-C1007, C1009-C1018, C1021-C1033, C1036-C1049, C1038-C1056, C1058-C1067, C1070-C1083, C1086-C1098, C1088-C1105, C1107-C1116, C1119-C1131, C1134-C1144, C1137-C1151, and C1153-C1162. Laminin EGF-like domains are found at residues 774–824 (CDCH…ACEQ), 825–888 (CECP…KCIE), 889–940 (CTCN…TCKP), 941–987 (CGCH…GCPA), 988–1035 (CDCN…GCQF), 1036–1085 (CHCN…GCED), 1086–1133 (CGCD…GCTE), 1134–1180 (CEPC…GCKL), 1181–1226 (CDCS…TCEP), and 1227–1283 (CGCN…GCTE). N796 is a glycosylation site (N-linked (GlcNAc...) asparagine). N991 is a glycosylation site (N-linked (GlcNAc...) asparagine). N1027 carries N-linked (GlcNAc...) asparagine glycosylation. The N-linked (GlcNAc...) asparagine glycan is linked to N1076. The N-linked (GlcNAc...) asparagine glycan is linked to N1164. 9 cysteine pairs are disulfide-bonded: C1165–C1178, C1181–C1193, C1183–C1200, C1202–C1211, C1214–C1224, C1227–C1246, C1229–C1252, C1254–C1263, and C1266–C1281. Residue N1288 is glycosylated (N-linked (GlcNAc...) asparagine). One can recognise a Laminin IV type A 2 domain in the interval 1295 to 1496 (QSDLVWQQMY…STTKAIGVEK (202 aa)). 12 disulfides stabilise this stretch: C1540/C1549, C1542/C1556, C1559/C1568, C1571/C1587, C1590/C1603, C1592/C1614, C1617/C1626, C1629/C1644, C1647/C1659, C1649/C1666, C1668/C1677, and C1680/C1691. Laminin EGF-like domains lie at 1540–1589 (CSCH…ACTK), 1590–1646 (CACP…TCSP), and 1647–1693 (CDCH…VCTS). 9 N-linked (GlcNAc...) asparagine glycosylation sites follow: N1717, N1734, N1777, N1806, N1839, N1875, N1969, N1984, and N2048. The segment at 2061-2084 (EAVSKMLGSEGSESGDANEESLRS) is disordered. Residues N2091, N2193, N2369, and N2479 are each glycosylated (N-linked (GlcNAc...) asparagine). Laminin G-like domains are found at residues 2467–2644 (SQRG…TDGC), 2652–2839 (DKII…IGMC), and 2913–3088 (RYGL…AKAC). C2617 and C2644 are joined by a disulfide. Residues N2672 and N2686 are each glycosylated (N-linked (GlcNAc...) asparagine). The cysteines at positions 2814 and 2839 are disulfide-linked. N-linked (GlcNAc...) asparagine glycans are attached at residues N2932, N2959, and N3007. Cysteines 3058 and 3088 form a disulfide.

Laminin is a complex glycoprotein, consisting of three different polypeptide chains (alpha, beta, gamma), which are bound to each other by disulfide bonds into a cross-shaped molecule comprising one long and three short arms with globules at each end.

It localises to the secreted. Its subcellular location is the extracellular space. The protein localises to the extracellular matrix. It is found in the basement membrane. Functionally, binding to cells via a high affinity receptor, laminin is thought to mediate the attachment, migration and organization of cells into tissues during embryonic development by interacting with other extracellular matrix components. Required to assemble a stable basement membrane and for organizing receptor complexes and cytoskeletal components to the proper cell surfaces. During embryogenesis, does not require the presence of collagen type IV in order to associate with cell surfaces, prior to assembly of the prototypical basement membrane. Plays an important role in muscle contraction of the body. Probably plays a distinct role from the related laminin subunit alpha epi-1. The polypeptide is Laminin subunit alpha lam-3 (Caenorhabditis elegans).